The primary structure comprises 387 residues: MNIHEYQAKEVLRKFGVATLKGKLAHSPEEAVAAAKEIGGSVWVVKAQIHAGGRGKGGGVKVAKSLDEVSEFTKKMIGMTLVTHQTGPEGKVVQKVFIEQGCNIAKEYYVACLIDRATGRAAMMASSEGGMDIEEVAEHNPDAIKKVDIDPTVGLMPFQARELAFQIGMEPAIVNKAVKFFAGLYNAFVATDCSIAEINPLVVTKEGDVLCLDAKMNFDSNSLFRHPDIVEMRDLNEEEPSEIEASKFDLAFIKLDGNIGCLVNGAGLAMATLDIIKLHGAEPANFLDVGGGANKEKVTEAFKIILKDKNVKGILVNIFGGIMKCDIIAEGVIAASKELGLKVPLVVRLEGTNVELGKKMLKESGLNITPADNLTDAAKKIVAAIKG.

One can recognise an ATP-grasp domain in the interval 9–244 (KEVLRKFGVA…LNEEEPSEIE (236 aa)). ATP contacts are provided by residues Lys-46, 53-55 (GRG), Glu-99, Cys-102, and Glu-107. 2 residues coordinate Mg(2+): Asn-199 and Asp-213. Substrate-binding positions include Asn-264 and 321-323 (GIM).

This sequence belongs to the succinate/malate CoA ligase beta subunit family. In terms of assembly, heterotetramer of two alpha and two beta subunits. Mg(2+) serves as cofactor.

The catalysed reaction is succinate + ATP + CoA = succinyl-CoA + ADP + phosphate. It catalyses the reaction GTP + succinate + CoA = succinyl-CoA + GDP + phosphate. Its pathway is carbohydrate metabolism; tricarboxylic acid cycle; succinate from succinyl-CoA (ligase route): step 1/1. Its function is as follows. Succinyl-CoA synthetase functions in the citric acid cycle (TCA), coupling the hydrolysis of succinyl-CoA to the synthesis of either ATP or GTP and thus represents the only step of substrate-level phosphorylation in the TCA. The beta subunit provides nucleotide specificity of the enzyme and binds the substrate succinate, while the binding sites for coenzyme A and phosphate are found in the alpha subunit. The sequence is that of Succinate--CoA ligase [ADP-forming] subunit beta from Bdellovibrio bacteriovorus (strain ATCC 15356 / DSM 50701 / NCIMB 9529 / HD100).